A 467-amino-acid chain; its full sequence is ATP synthase subunit beta (467 aa).

An ATP-binding site is contributed by 156–163; sequence GGAGVGKT.

Belongs to the ATPase alpha/beta chains family. In terms of assembly, F-type ATPases have 2 components, CF(1) - the catalytic core - and CF(0) - the membrane proton channel. CF(1) has five subunits: alpha(3), beta(3), gamma(1), delta(1), epsilon(1). CF(0) has three main subunits: a(1), b(2) and c(9-12). The alpha and beta chains form an alternating ring which encloses part of the gamma chain. CF(1) is attached to CF(0) by a central stalk formed by the gamma and epsilon chains, while a peripheral stalk is formed by the delta and b chains.

Its subcellular location is the cell inner membrane. The enzyme catalyses ATP + H2O + 4 H(+)(in) = ADP + phosphate + 5 H(+)(out). Its function is as follows. Produces ATP from ADP in the presence of a proton gradient across the membrane. The catalytic sites are hosted primarily by the beta subunits. The polypeptide is ATP synthase subunit beta (Cupriavidus necator (strain ATCC 17699 / DSM 428 / KCTC 22496 / NCIMB 10442 / H16 / Stanier 337) (Ralstonia eutropha)).